A 376-amino-acid polypeptide reads, in one-letter code: UDP-4-amino-4,6-dideoxy-N-acetyl-beta-L-altrosamine transaminase (376 aa).

Residues Y4, 24–27, A54, and S176 contribute to the substrate site; that span reads EILT. K181 is modified (N6-(pyridoxal phosphate)lysine). Residues N226 and 311–314 each bind substrate; that span reads QVHY.

Belongs to the DegT/DnrJ/EryC1 family.

It catalyses the reaction UDP-4-amino-4,6-dideoxy-N-acetyl-beta-L-altrosamine + 2-oxoglutarate = UDP-2-acetamido-2,6-dideoxy-beta-L-arabino-hex-4-ulose + L-glutamate. Its function is as follows. Catalyzes the second step in the biosynthesis of pseudaminic acid, a sialic-acid-like sugar that is used to modify flagellin. Uses UDP-2-acetamido-2,6-dideoxy-beta-L-arabino-4-hexulose as substrate producing UDP-4-amino-4,6-dideoxy-beta-L-AltNAc. The chain is UDP-4-amino-4,6-dideoxy-N-acetyl-beta-L-altrosamine transaminase (pseC) from Campylobacter jejuni subsp. jejuni serotype O:2 (strain ATCC 700819 / NCTC 11168).